The primary structure comprises 557 residues: Estrogen receptor beta (557 aa).

The interval methionine 1–tyrosine 154 is modulating. NR C4-type zinc fingers lie at residues cysteine 155–cysteine 175 and cysteine 191–cysteine 215. A DNA-binding region (nuclear receptor) is located at residues cysteine 155–methionine 220. Residues leucine 240–lysine 268 form a disordered region. The region spanning threonine 272 to histidine 508 is the NR LBD domain. The interval serine 513–glutamine 557 is disordered. A compositionally biased stretch (polar residues) spans glycine 539–glutamine 557.

It belongs to the nuclear hormone receptor family. NR3 subfamily. As to quaternary structure, binds DNA as a homodimer. Can form a heterodimer with ER-alpha.

The protein resides in the nucleus. In terms of biological role, binds estrogens with an affinity similar to that of ER-alpha, and activates expression of reporter genes containing estrogen response elements (ERE) in an estrogen-dependent manner. This is Estrogen receptor beta (esr2) from Oreochromis niloticus (Nile tilapia).